The chain runs to 284 residues: uncharacterized protein (284 aa).

The protein belongs to the AtsA family.

This is an uncharacterized protein from Mycobacterium leprae (strain TN).